Here is a 558-residue protein sequence, read N- to C-terminus: uncharacterized protein (558 aa).

Transmembrane regions (helical) follow at residues 15–32 (PSVT…ALGL), 39–61 (IGTI…HFGV), 76–95 (LVIF…FPSL), 104–126 (LISL…ILGI), and 166–188 (MALA…LALL). 2 consecutive RCK C-terminal domains span residues 196-278 (EERD…LFGK) and 286-370 (RPDI…ILGD). 5 consecutive transmembrane segments (helical) span residues 383-405 (LFGG…GVSM), 409-426 (LGLA…GAFG), 446-468 (FGII…DTII), 473-495 (LLWV…WASI), and 533-555 (VVYA…IMIL).

This sequence belongs to the AAE transporter (TC 2.A.81) family.

The protein localises to the cell membrane. This is an uncharacterized protein from Porphyromonas gingivalis (strain ATCC BAA-308 / W83).